The primary structure comprises 400 residues: Large envelope protein (400 aa).

Gly2 carries N-myristoyl glycine; by host lipidation. A pre-S1 region spans residues 2 to 119 (GGWLPKPRKG…PPLRDSHPQA (118 aa)). A pre-S region spans residues 2–174 (GGWLPKPRKG…SSRTGDPAPT (173 aa)). Over 2–181 (GGWLPKPRKG…APTMENITSG (180 aa)) the chain is Virion surface; in external conformation. Residues 2 to 253 (GGWLPKPRKG…PGYRWMCLRR (252 aa)) lie on the Intravirion; in internal conformation side of the membrane. Residues 84 to 115 (TLTTVPAVPPPASANRQSGRQPTPISPPLRDS) are disordered. Polar residues predominate over residues 97-106 (ANRQSGRQPT). The interval 120–174 (IKWNSPAFHQALQDPRVKGLYFPAGGSSSGTVSPVPNIASHISSISSRTGDPAPT) is pre-S2. A helical membrane pass occupies residues 182–202 (FLGPLLVLQAGFFLLTRILTI). At 203 to 253 (PQSLDSWWTSLNFLGGSPVCLGQNSQSPTSNHSPTSCPPICPGYRWMCLRR) the chain is on the intravirion; in external conformation side. A helical membrane pass occupies residues 254–274 (FIIFLFILLLCLIFLLVLLDY). Residues 275–348 (QGMLPVCPLI…WASVRFSWLS (74 aa)) lie on the Virion surface side of the membrane. N-linked (GlcNAc...) asparagine; by host glycosylation occurs at Asn320. A helical membrane pass occupies residues 349-369 (LLVPFVQWFVGLSPTVWLSVI). At 370–375 (WMMWYW) the chain is on the intravirion side. A helical transmembrane segment spans residues 376–398 (GPRLYNILSPFIPLLPIFFCLWV). Over 399–400 (YI) the chain is Virion surface.

This sequence belongs to the orthohepadnavirus major surface antigen family. As to quaternary structure, li-HBsAg interacts with capsid protein and with HDV Large delta antigen. Isoform M associates with host chaperone CANX through its pre-S2 N glycan. This association may be essential for M proper secretion. In terms of processing, isoform M is N-terminally acetylated by host at a ratio of 90%, and N-glycosylated by host at the pre-S2 region. Post-translationally, myristoylated.

The protein resides in the virion membrane. Functionally, the large envelope protein exists in two topological conformations, one which is termed 'external' or Le-HBsAg and the other 'internal' or Li-HBsAg. In its external conformation the protein attaches the virus to cell receptors and thereby initiating infection. This interaction determines the species specificity and liver tropism. This attachment induces virion internalization predominantly through caveolin-mediated endocytosis. The large envelope protein also assures fusion between virion membrane and endosomal membrane. In its internal conformation the protein plays a role in virion morphogenesis and mediates the contact with the nucleocapsid like a matrix protein. The middle envelope protein plays an important role in the budding of the virion. It is involved in the induction of budding in a nucleocapsid independent way. In this process the majority of envelope proteins bud to form subviral lipoprotein particles of 22 nm of diameter that do not contain a nucleocapsid. In Hepatitis B virus genotype A3 (isolate Cameroon/CMR983/1994) (HBV-A), this protein is Large envelope protein.